A 360-amino-acid polypeptide reads, in one-letter code: Arginase, non-hepatic 2 (360 aa).

Residues His-122, Asp-145, His-147, and Asp-149 each coordinate Mn(2+). Residues 147–151 (HADIN), 158–160 (SGN), and Asp-204 each bind substrate. Mn(2+) is bound by residues Asp-253 and Asp-255. Substrate contacts are provided by Thr-267 and Glu-298.

Belongs to the arginase family. As to quaternary structure, homotrimer. The cofactor is Mn(2+). Expressed at differing tadpole stages in tail, intestine, hindlimb and trunk region. Strongest in tadpole tail.

It carries out the reaction L-arginine + H2O = urea + L-ornithine. It functions in the pathway nitrogen metabolism; urea cycle; L-ornithine and urea from L-arginine: step 1/1. In terms of biological role, as well as its role in the urea cycle, may be involved in tissue remodeling. This is Arginase, non-hepatic 2 (arg2-b) from Xenopus laevis (African clawed frog).